We begin with the raw amino-acid sequence, 376 residues long: 12-oxophytodienoate reductase 1 (376 aa).

FMN contacts are provided by residues 35-37 (PLT), Ala-68, and Gln-110. Residues Ser-143 and 187 to 190 (HGAH) contribute to the substrate site. Tyr-192 functions as the Proton donor in the catalytic mechanism. Arg-239 is a binding site for FMN. Arg-279 serves as a coordination point for substrate. FMN is bound by residues Gly-309 and 330 to 331 (GR).

The protein belongs to the NADH:flavin oxidoreductase/NADH oxidase family. The cofactor is FMN. Constitutively expressed in roots, leaves, cotyledons, cells culture and to a lower extent in flowers.

Its subcellular location is the cytoplasm. The catalysed reaction is (1S,2S)-OPC-8 + NADP(+) = (9S,13S,15Z)-12-oxophyto-10,15-dienoate + NADPH + H(+). Its pathway is lipid metabolism; oxylipin biosynthesis. In terms of biological role, specifically cleaves olefinic bonds in alpha,beta-unsaturated carbonyls and may be involved in detoxification or modification of these reactive compounds. May be involved in the biosynthesis or metabolism of oxylipin signaling molecules. In vitro, reduces 9R,13R-12-oxophyodienoic acid (9R,13R-OPDA) to 9R,13R-OPC-8:0, but not 9S,13S-OPDA, the natural precursor of jasmonic acid. Also reduces N-ethylmaleimide and maleic acid. The chain is 12-oxophytodienoate reductase 1 (OPR1) from Solanum lycopersicum (Tomato).